Here is a 389-residue protein sequence, read N- to C-terminus: tRNA-specific 2-thiouridylase MnmA (389 aa).

ATP contacts are provided by residues 9 to 16 and M35; that span reads GMSGGVDS. The tract at residues 95 to 97 is interaction with target base in tRNA; the sequence is NPD. The active-site Nucleophile is C100. A disulfide bridge links C100 with C196. An ATP-binding site is contributed by G124. The interaction with tRNA stretch occupies residues 146-148; the sequence is KDQ. C196 acts as the Cysteine persulfide intermediate in catalysis. The segment at 308-309 is interaction with tRNA; that stretch reads RY.

This sequence belongs to the MnmA/TRMU family.

The protein localises to the cytoplasm. It catalyses the reaction S-sulfanyl-L-cysteinyl-[protein] + uridine(34) in tRNA + AH2 + ATP = 2-thiouridine(34) in tRNA + L-cysteinyl-[protein] + A + AMP + diphosphate + H(+). Functionally, catalyzes the 2-thiolation of uridine at the wobble position (U34) of tRNA, leading to the formation of s(2)U34. The chain is tRNA-specific 2-thiouridylase MnmA from Burkholderia ambifaria (strain MC40-6).